We begin with the raw amino-acid sequence, 160 residues long: MELRETKVAVYGKGGIGKSTTSCNTSIALARRGRRILQIGCDPKHDSTFTPTGFSIPTIIDTSQSKDYHYEDVWPEDVIHRGYGGVDCVEAGGPPAGAGCGGYVVGETVKPLKESNAFYEYDIILFDVLGDVVCGGFAAPLNYADYCIIITDNGFDALSA.

ATP is bound by residues glycine 15 to threonine 20 and lysine 44. Serine 19 is a Mg(2+) binding site. Residues cysteine 100 and cysteine 134 each contribute to the [4Fe-4S] cluster site.

It belongs to the NifH/BchL/ChlL family. As to quaternary structure, homodimer. Protochlorophyllide reductase is composed of three subunits; ChlL, ChlN and ChlB. It depends on [4Fe-4S] cluster as a cofactor.

It is found in the plastid. It localises to the chloroplast. It carries out the reaction chlorophyllide a + oxidized 2[4Fe-4S]-[ferredoxin] + 2 ADP + 2 phosphate = protochlorophyllide a + reduced 2[4Fe-4S]-[ferredoxin] + 2 ATP + 2 H2O. It functions in the pathway porphyrin-containing compound metabolism; chlorophyll biosynthesis (light-independent). In terms of biological role, component of the dark-operative protochlorophyllide reductase (DPOR) that uses Mg-ATP and reduced ferredoxin to reduce ring D of protochlorophyllide (Pchlide) to form chlorophyllide a (Chlide). This reaction is light-independent. The L component serves as a unique electron donor to the NB-component of the complex, and binds Mg-ATP. This chain is Light-independent protochlorophyllide reductase iron-sulfur ATP-binding protein (chlL), found in Polystichum acrostichoides (Christmas fern).